A 729-amino-acid chain; its full sequence is Capsid protein VP1 (729 aa).

The span at 1 to 10 shows a compositional bias: basic residues; that stretch reads MAPPAKRAKR. 3 disordered regions span residues 1–39, 96–115, and 130–185; these read MAPP…DAAA, LATD…KRTR, and KLTS…VGVS. A Nuclear localization signal motif is present at residues 4–13; sequence PAKRAKRGWV. The tract at residues 19-64 is phospholipase A2-like; the sequence is YLGPGNSLDQGEPTNPSDAAAKEHDEAYDQYIKSGKNPYLYFSAAD. Polar residues predominate over residues 25–35; the sequence is SLDQGEPTNPS. Residues 132-142 show a composition bias toward low complexity; that stretch reads TSSAAQQSSQT. Positions 168 to 184 are enriched in gly residues; that stretch reads GPGGSGGGGSGGGGVGV. N325 contacts Mg(2+).

The protein belongs to the parvoviridae capsid protein family.

The protein localises to the virion. Its subcellular location is the host nucleus. Capsid protein self-assembles to form an icosahedral capsid with a T=1 symmetry, about 22 nm in diameter, and consisting of 60 copies of two size variants of the capsid proteins, VP1 and VP2, which differ by the presence of an N-terminal extension in the minor protein VP1. The capsid encapsulates the genomic ssDNA. Capsid proteins are responsible for the attachment to host cell receptors. This attachment induces virion internalization predominantly through clathrin-dependent endocytosis. Binding to the host receptors also induces capsid rearrangements leading to surface exposure of VP1 N-terminus, specifically its phospholipase A2-like region and putative nuclear localization signal(s). VP1 N-terminus might serve as a lipolytic enzyme to breach the endosomal membrane during entry into host cell and might contribute to virus transport to the nucleus. The sequence is that of Capsid protein VP1 from Mus musculus (Mouse).